We begin with the raw amino-acid sequence, 910 residues long: NADH-quinone oxidoreductase subunit G (910 aa).

One can recognise a 2Fe-2S ferredoxin-type domain in the interval 1-83 (MAKIYVDGKA…GTIISINDDT (83 aa)). Cysteine 34, cysteine 45, cysteine 48, and cysteine 67 together coordinate [2Fe-2S] cluster. Residues 83–122 (TSKKFRSNIVELLLTNHPHDCPVCEEGGNCHLQDMTVMTT) enclose the 4Fe-4S His(Cys)3-ligated-type domain. [4Fe-4S] cluster contacts are provided by histidine 99, cysteine 103, cysteine 106, cysteine 112, cysteine 151, cysteine 154, cysteine 157, cysteine 201, cysteine 228, cysteine 231, cysteine 235, and cysteine 263. The 57-residue stretch at 221–277 (MQYAPGICQNCSIGCNISIGERYGEIRRIENRYHESINHYLICDLGRFGYSHTNLKN) folds into the 4Fe-4S Mo/W bis-MGD-type domain.

This sequence belongs to the complex I 75 kDa subunit family. In terms of assembly, composed of 13 different subunits. Subunits NuoCD, E, F, and G constitute the peripheral sector of the complex. The cofactor is [2Fe-2S] cluster. [4Fe-4S] cluster is required as a cofactor.

The catalysed reaction is a quinone + NADH + 5 H(+)(in) = a quinol + NAD(+) + 4 H(+)(out). Its function is as follows. NDH-1 shuttles electrons from NADH, via FMN and iron-sulfur (Fe-S) centers, to quinones in the respiratory chain. Couples the redox reaction to proton translocation (for every two electrons transferred, four hydrogen ions are translocated across the cytoplasmic membrane), and thus conserves the redox energy in a proton gradient. This chain is NADH-quinone oxidoreductase subunit G (nuoG), found in Buchnera aphidicola subsp. Schizaphis graminum (strain Sg).